Here is a 295-residue protein sequence, read N- to C-terminus: MSIDWEQTFRKWSKPSSETESTKAENAERMIKAAINSSQILSTKDISVFPQGSYRNNTNVREDSDVDICVCLNTLVLSDYSLVPGMNDKLAELRTASYTYKQFKSDLETALKNKFGTLGVSRGDKAFDVHANSYRVDADVVPAIQGRLYYDKNHNAFIRGTCIKPDSGGTIYNWPEQNYSNGVNKNKSTGNRFKLIVRAIKRLRNHLAEKGYNTAKPIPSYLMECLVYIVPDQYFTGDSYKTNVENCINYLYNQIDSSDWTEINEIKYLFGSHQMWNKTQVKEFLLTAWSYIQKN.

Positions 1-25 (MSIDWEQTFRKWSKPSSETESTKAE) are disordered. Residues glutamine 51, serine 53, and asparagine 59 each coordinate UTP. Aspartate 65 and aspartate 67 together coordinate Mg(2+). Residues aspartate 67, aspartate 124, and lysine 125 each coordinate UTP. 2 residues coordinate Mg(2+): aspartate 128 and aspartate 139. Positions 139, 173, 201, and 220 each coordinate UTP. Residues 274-276 (QMW) carry the Pyrimidine specificity motif (R/Q)xW in donor pocket motif.

It belongs to the CD-NTase family. E02 subfamily. The cofactor is Mg(2+).

It carries out the reaction 2 UTP = c-di-UMP + 2 diphosphate. The catalysed reaction is UTP + CTP = cyclic CMP-UMP + 2 diphosphate. Functionally, cyclic nucleotide synthase (second messenger synthase) of a CBASS antivirus system. CBASS (cyclic oligonucleotide-based antiphage signaling system) provides immunity against bacteriophage. The CD-NTase protein synthesizes cyclic nucleotides in response to infection; these serve as specific second messenger signals. The signals activate a diverse range of effectors, leading to bacterial cell death and thus abortive phage infection. A type I-B(UU) CBASS system. In terms of biological role, cyclic dinucleotide synthase that catalyzes the synthesis of 3',3'-cyclic UMP-UMP (c-di-UMP) as the major product, and of 3',3'-cyclic CMP-UMP as a minor product, which are second messengers for cell signal transduction. This is Cyclic dipyrimidine nucleotide synthase CdnE from Legionella pneumophila.